A 241-amino-acid polypeptide reads, in one-letter code: 1-(5-phosphoribosyl)-5-[(5-phosphoribosylamino)methylideneamino] imidazole-4-carboxamide isomerase (241 aa).

The active-site Proton acceptor is the aspartate 7. Aspartate 129 acts as the Proton donor in catalysis.

Belongs to the HisA/HisF family.

The protein resides in the cytoplasm. It catalyses the reaction 1-(5-phospho-beta-D-ribosyl)-5-[(5-phospho-beta-D-ribosylamino)methylideneamino]imidazole-4-carboxamide = 5-[(5-phospho-1-deoxy-D-ribulos-1-ylimino)methylamino]-1-(5-phospho-beta-D-ribosyl)imidazole-4-carboxamide. Its pathway is amino-acid biosynthesis; L-histidine biosynthesis; L-histidine from 5-phospho-alpha-D-ribose 1-diphosphate: step 4/9. In Buchnera aphidicola subsp. Baizongia pistaciae (strain Bp), this protein is 1-(5-phosphoribosyl)-5-[(5-phosphoribosylamino)methylideneamino] imidazole-4-carboxamide isomerase.